Reading from the N-terminus, the 468-residue chain is Proline--tRNA ligase (468 aa).

The protein belongs to the class-II aminoacyl-tRNA synthetase family. ProS type 3 subfamily. Homodimer.

It is found in the cytoplasm. The enzyme catalyses tRNA(Pro) + L-proline + ATP = L-prolyl-tRNA(Pro) + AMP + diphosphate. Catalyzes the attachment of proline to tRNA(Pro) in a two-step reaction: proline is first activated by ATP to form Pro-AMP and then transferred to the acceptor end of tRNA(Pro). The chain is Proline--tRNA ligase from Frankia casuarinae (strain DSM 45818 / CECT 9043 / HFP020203 / CcI3).